A 319-amino-acid chain; its full sequence is Transaldolase (319 aa).

The active-site Schiff-base intermediate with substrate is lysine 126.

The protein belongs to the transaldolase family. Type 1 subfamily. In terms of assembly, homodimer.

Its subcellular location is the cytoplasm. The catalysed reaction is D-sedoheptulose 7-phosphate + D-glyceraldehyde 3-phosphate = D-erythrose 4-phosphate + beta-D-fructose 6-phosphate. It participates in carbohydrate degradation; pentose phosphate pathway; D-glyceraldehyde 3-phosphate and beta-D-fructose 6-phosphate from D-ribose 5-phosphate and D-xylulose 5-phosphate (non-oxidative stage): step 2/3. Its function is as follows. Transaldolase is important for the balance of metabolites in the pentose-phosphate pathway. The polypeptide is Transaldolase (Bordetella petrii (strain ATCC BAA-461 / DSM 12804 / CCUG 43448)).